The primary structure comprises 675 residues: L-type lectin-domain containing receptor kinase IX.2 (675 aa).

The signal sequence occupies residues 1-35 (MLYFIFCQNLSSSSSMSNSILFLSLFLFLPFVVDS). N-linked (GlcNAc...) asparagine glycans are attached at residues N9, N39, N110, N146, N179, N186, N191, and N212. A legume-lectin like region spans residues 36–269 (LYFNFTSFRQ…EEHRLLSWEL (234 aa)). Over 36–281 (LYFNFTSFRQ…SLDSDKADSR (246 aa)) the chain is Extracellular. Residues 282-302 (IGLVIGISASGFVFLTFMVIT) form a helical membrane-spanning segment. Residues 303–675 (TVVVWSRKQR…VTFSGIEYGR (373 aa)) are Cytoplasmic-facing. The Protein kinase domain occupies 350–631 (FSSHRKLGEG…KQGIQVMNFE (282 aa)). Residues 356–364 (LGEGGFGAV) and K379 contribute to the ATP site. D475 functions as the Proton acceptor in the catalytic mechanism.

This sequence in the C-terminal section; belongs to the protein kinase superfamily. Ser/Thr protein kinase family. The protein in the N-terminal section; belongs to the leguminous lectin family. In terms of assembly, interacts with ABCG40.

Its subcellular location is the cell membrane. The enzyme catalyses L-seryl-[protein] + ATP = O-phospho-L-seryl-[protein] + ADP + H(+). It catalyses the reaction L-threonyl-[protein] + ATP = O-phospho-L-threonyl-[protein] + ADP + H(+). Functionally, promotes hydrogen peroxide H(2)O(2) production and cell death. In terms of biological role, involved in resistance response to the pathogenic oomycetes Phytophthora infestans and Phytophthora capsici. This is L-type lectin-domain containing receptor kinase IX.2 from Arabidopsis thaliana (Mouse-ear cress).